Reading from the N-terminus, the 437-residue chain is UDP-N-acetylmuramate--L-alanine ligase (437 aa).

ATP is bound at residue 108 to 114 (GAHGKTS).

Belongs to the MurCDEF family.

The protein resides in the cytoplasm. It carries out the reaction UDP-N-acetyl-alpha-D-muramate + L-alanine + ATP = UDP-N-acetyl-alpha-D-muramoyl-L-alanine + ADP + phosphate + H(+). The protein operates within cell wall biogenesis; peptidoglycan biosynthesis. Functionally, cell wall formation. This chain is UDP-N-acetylmuramate--L-alanine ligase, found in Staphylococcus aureus (strain COL).